We begin with the raw amino-acid sequence, 295 residues long: 4-hydroxy-tetrahydrodipicolinate synthase (295 aa).

T46 lines the pyruvate pocket. Y135 acts as the Proton donor/acceptor in catalysis. K164 functions as the Schiff-base intermediate with substrate in the catalytic mechanism. I205 lines the pyruvate pocket.

This sequence belongs to the DapA family. In terms of assembly, homotetramer; dimer of dimers.

It is found in the cytoplasm. It carries out the reaction L-aspartate 4-semialdehyde + pyruvate = (2S,4S)-4-hydroxy-2,3,4,5-tetrahydrodipicolinate + H2O + H(+). Its pathway is amino-acid biosynthesis; L-lysine biosynthesis via DAP pathway; (S)-tetrahydrodipicolinate from L-aspartate: step 3/4. Functionally, catalyzes the condensation of (S)-aspartate-beta-semialdehyde [(S)-ASA] and pyruvate to 4-hydroxy-tetrahydrodipicolinate (HTPA). This Wolinella succinogenes (strain ATCC 29543 / DSM 1740 / CCUG 13145 / JCM 31913 / LMG 7466 / NCTC 11488 / FDC 602W) (Vibrio succinogenes) protein is 4-hydroxy-tetrahydrodipicolinate synthase.